Consider the following 29-residue polypeptide: Toxin Bcg III 15.67 (29 aa).

The EGF-like domain occupies 2–29; the sequence is QGTACTGEHAHSFCLNGGTCRHIQQLGE. A disulfide bridge links C6 with C21.

The protein localises to the secreted. Its subcellular location is the nematocyst. In terms of biological role, has both toxic and EGF activity. This chain is Toxin Bcg III 15.67, found in Bunodosoma cangicum (Sea anemone).